The chain runs to 229 residues: Putative ABC transporter permease protein ORF1 (229 aa).

Residues Ala-23–Val-214 form the ABC transmembrane type-1 domain. 5 helical membrane-spanning segments follow: residues Leu-27 to Val-47, Trp-62 to Leu-82, Leu-91 to Ala-111, Ala-150 to Leu-170, and Ser-194 to Val-214.

It belongs to the binding-protein-dependent transport system permease family. MalFG subfamily.

It localises to the cell membrane. Functionally, may participate in oleandomycin secretion during antibiotic production. The polypeptide is Putative ABC transporter permease protein ORF1 (Streptomyces antibioticus).